A 341-amino-acid chain; its full sequence is Glyceraldehyde-3-phosphate dehydrogenase 4 (341 aa).

Residues 13–14, Asp35, and Lys85 contribute to the NAD(+) site; that span reads RI. Residues 157 to 159, Thr188, 217 to 218, and Arg240 each bind D-glyceraldehyde 3-phosphate; these read SCT and TG. The active-site Nucleophile is the Cys158. Position 322 (Asn322) interacts with NAD(+).

The protein belongs to the glyceraldehyde-3-phosphate dehydrogenase family. In terms of assembly, homotetramer.

It localises to the cytoplasm. It catalyses the reaction D-glyceraldehyde 3-phosphate + phosphate + NAD(+) = (2R)-3-phospho-glyceroyl phosphate + NADH + H(+). It functions in the pathway carbohydrate degradation; glycolysis; pyruvate from D-glyceraldehyde 3-phosphate: step 1/5. The protein is Glyceraldehyde-3-phosphate dehydrogenase 4 (gpd-4) of Caenorhabditis elegans.